A 94-amino-acid chain; its full sequence is Pyrimidine/purine nucleoside phosphorylase (94 aa).

This sequence belongs to the nucleoside phosphorylase PpnP family.

It catalyses the reaction a purine D-ribonucleoside + phosphate = a purine nucleobase + alpha-D-ribose 1-phosphate. The catalysed reaction is adenosine + phosphate = alpha-D-ribose 1-phosphate + adenine. The enzyme catalyses cytidine + phosphate = cytosine + alpha-D-ribose 1-phosphate. It carries out the reaction guanosine + phosphate = alpha-D-ribose 1-phosphate + guanine. It catalyses the reaction inosine + phosphate = alpha-D-ribose 1-phosphate + hypoxanthine. The catalysed reaction is thymidine + phosphate = 2-deoxy-alpha-D-ribose 1-phosphate + thymine. The enzyme catalyses uridine + phosphate = alpha-D-ribose 1-phosphate + uracil. It carries out the reaction xanthosine + phosphate = alpha-D-ribose 1-phosphate + xanthine. Catalyzes the phosphorolysis of diverse nucleosides, yielding D-ribose 1-phosphate and the respective free bases. Can use uridine, adenosine, guanosine, cytidine, thymidine, inosine and xanthosine as substrates. Also catalyzes the reverse reactions. The chain is Pyrimidine/purine nucleoside phosphorylase from Salmonella newport (strain SL254).